Here is a 532-residue protein sequence, read N- to C-terminus: Bifunctional purine biosynthesis protein PurH (532 aa).

The MGS-like domain occupies 1 to 147; the sequence is MADRPIRQAL…KNHKDVAIVV (147 aa).

The protein belongs to the PurH family.

The enzyme catalyses (6R)-10-formyltetrahydrofolate + 5-amino-1-(5-phospho-beta-D-ribosyl)imidazole-4-carboxamide = 5-formamido-1-(5-phospho-D-ribosyl)imidazole-4-carboxamide + (6S)-5,6,7,8-tetrahydrofolate. The catalysed reaction is IMP + H2O = 5-formamido-1-(5-phospho-D-ribosyl)imidazole-4-carboxamide. It functions in the pathway purine metabolism; IMP biosynthesis via de novo pathway; 5-formamido-1-(5-phospho-D-ribosyl)imidazole-4-carboxamide from 5-amino-1-(5-phospho-D-ribosyl)imidazole-4-carboxamide (10-formyl THF route): step 1/1. It participates in purine metabolism; IMP biosynthesis via de novo pathway; IMP from 5-formamido-1-(5-phospho-D-ribosyl)imidazole-4-carboxamide: step 1/1. This Haemophilus influenzae (strain ATCC 51907 / DSM 11121 / KW20 / Rd) protein is Bifunctional purine biosynthesis protein PurH.